The sequence spans 495 residues: UDP-glycosyltransferase 73C6 (495 aa).

UDP-alpha-D-glucose is bound by residues Ser-296, 356 to 358 (SPQ), 373 to 381 (HCGWNSTLE), and 395 to 398 (FADQ). Positions 449–475 (SDDAKERRRRAKELGESAHKAVEEGGS) are disordered. Residues 450-471 (DDAKERRRRAKELGESAHKAVE) show a composition bias toward basic and acidic residues.

This sequence belongs to the UDP-glycosyltransferase family. Expressed in leaves and flowers, and at a very low level in roots.

Acts as a UDP-glucose:flavonol-3-O-glycoside-7-O-glucosyltransferase. 6- and 7-hydroxyflavone, but not 3- or 5-hydroxyflavone are accepted as substrates. Possesses low quercetin 3-O-glucosyltransferase, 7-O-glucosyltransferase and 4'-O-glucosyltransferase activities in vitro. This chain is UDP-glycosyltransferase 73C6 (UGT73C6), found in Arabidopsis thaliana (Mouse-ear cress).